We begin with the raw amino-acid sequence, 325 residues long: Terpene synthase 11 (325 aa).

Residues D97 to E102 carry the DDxx(x)D/E motif motif. An NDxxSxxxD/E motif motif is present at residues N227–E235.

It belongs to the terpene synthase family.

It catalyses the reaction (2E,6E)-farnesyl diphosphate = (E)-beta-farnesene + diphosphate. The catalysed reaction is (2E,6E)-farnesyl diphosphate = (3E,6E)-alpha-farnesene + diphosphate. The enzyme catalyses geranylgeranyl diphosphate + H2O = (S)-(+)-nephthenol + diphosphate. Its function is as follows. Terpene synthase that converts its substrate farnesyl diphosphate (FPP) into the sesquiterpenes (E)-beta-farnesene and (E,E)-alpha-farnesene. TPS11 also converts geranylgeranyl diphosphate (GGPP) into the diterpene (S)-nephthenol. The chain is Terpene synthase 11 from Dictyostelium purpureum (Slime mold).